The primary structure comprises 126 residues: Holo-[acyl-carrier-protein] synthase (126 aa).

2 residues coordinate Mg(2+): D9 and E58.

The protein belongs to the P-Pant transferase superfamily. AcpS family. In terms of assembly, homodimer. It depends on Mg(2+) as a cofactor.

It is found in the cytoplasm. It carries out the reaction apo-[ACP] + CoA = holo-[ACP] + adenosine 3',5'-bisphosphate + H(+). Functionally, transfers the 4'-phosphopantetheine moiety from coenzyme A to the 'Ser-36' of acyl-carrier-protein. This Escherichia coli O157:H7 protein is Holo-[acyl-carrier-protein] synthase.